The following is a 393-amino-acid chain: Proteasome-activating nucleotidase (393 aa).

The stretch at 15 to 53 (DEVQLVRLLEEKIKSLQIEIENLRKELNYYKAEMEKMLS) forms a coiled coil. Residues 178–183 (GTGKTM) and Y317 contribute to the ATP site. A coiled-coil region spans residues 365 to 393 (MNDLVEAINKINVKRNKMESMKERREKYS). The tract at residues 391–393 (KYS) is docks into pockets in the proteasome alpha-ring to cause gate opening.

This sequence belongs to the AAA ATPase family. Homohexamer. The hexameric complex has a two-ring architecture resembling a top hat that caps the 20S proteasome core at one or both ends. Upon ATP-binding, the C-terminus of PAN interacts with the alpha-rings of the proteasome core by binding to the intersubunit pockets.

It localises to the cytoplasm. In terms of biological role, ATPase which is responsible for recognizing, binding, unfolding and translocation of substrate proteins into the archaeal 20S proteasome core particle. Is essential for opening the gate of the 20S proteasome via an interaction with its C-terminus, thereby allowing substrate entry and access to the site of proteolysis. Thus, the C-termini of the proteasomal ATPase function like a 'key in a lock' to induce gate opening and therefore regulate proteolysis. Unfolding activity requires energy from ATP hydrolysis, whereas ATP binding alone promotes ATPase-20S proteasome association which triggers gate opening, and supports translocation of unfolded substrates. The protein is Proteasome-activating nucleotidase of Saccharolobus solfataricus (strain ATCC 35092 / DSM 1617 / JCM 11322 / P2) (Sulfolobus solfataricus).